The sequence spans 208 residues: Small ribosomal subunit protein uS4 (208 aa).

In terms of domain architecture, S4 RNA-binding spans 98-158 (CRLDTVSYRM…EKAKNHLRIK (61 aa)).

Belongs to the universal ribosomal protein uS4 family. As to quaternary structure, part of the 30S ribosomal subunit. Contacts protein S5. The interaction surface between S4 and S5 is involved in control of translational fidelity.

Functionally, one of the primary rRNA binding proteins, it binds directly to 16S rRNA where it nucleates assembly of the body of the 30S subunit. With S5 and S12 plays an important role in translational accuracy. The protein is Small ribosomal subunit protein uS4 of Nitrosospira multiformis (strain ATCC 25196 / NCIMB 11849 / C 71).